A 107-amino-acid polypeptide reads, in one-letter code: MCTGSTGSLIPSVSDSANSVRRGNLSLCSVLLSWLICAMCLWNDARESLVNVRIANYVFDFAVLWTLLARVLGPPGRPVLQQHHPVQLPVPTEPSVFVKLCNQRVRL.

A helical transmembrane segment spans residues 25-42 (LSLCSVLLSWLICAMCLW).

It is found in the host membrane. This is an uncharacterized protein from Galliformes (FAdV-1).